The sequence spans 158 residues: Low molecular weight phosphotyrosine protein phosphatase (158 aa).

N-acetylalanine is present on A2. C13 (nucleophile) is an active-site residue. The active site involves R19. The active-site Proton donor is D130. Phosphotyrosine is present on residues Y132 and Y133.

It belongs to the low molecular weight phosphotyrosine protein phosphatase family. Interacts with EPHA2; dephosphorylates EPHA2. Interacts with EPHB1. Interacts with the SH3 domain of SPTAN1. In terms of processing, phosphorylated by LCK. Phosphorylation at Tyr-132 increases its phosphatase activity.

The protein resides in the cytoplasm. It carries out the reaction O-phospho-L-tyrosyl-[protein] + H2O = L-tyrosyl-[protein] + phosphate. It catalyses the reaction a phosphate monoester + H2O = an alcohol + phosphate. Inhibited by sulfhydryl reagents. Acts on tyrosine phosphorylated proteins, low-MW aryl phosphates and natural and synthetic acyl phosphates with differences in substrate specificity between isoform 1 and isoform 2. In Pongo abelii (Sumatran orangutan), this protein is Low molecular weight phosphotyrosine protein phosphatase (ACP1).